We begin with the raw amino-acid sequence, 513 residues long: GMP synthase [glutamine-hydrolyzing] (513 aa).

The Glutamine amidotransferase type-1 domain occupies 3–200; it reads SVLVLDFGSQ…LITIAGITPD (198 aa). Catalysis depends on cysteine 80, which acts as the Nucleophile. Active-site residues include histidine 174 and glutamate 176. The region spanning 201 to 388 is the GMPS ATP-PPase domain; sequence WSSKSFIEHQ…LGIAEDILMR (188 aa). 228-234 contacts ATP; sequence SGGVDST.

In terms of assembly, homodimer.

The catalysed reaction is XMP + L-glutamine + ATP + H2O = GMP + L-glutamate + AMP + diphosphate + 2 H(+). It functions in the pathway purine metabolism; GMP biosynthesis; GMP from XMP (L-Gln route): step 1/1. In terms of biological role, catalyzes the synthesis of GMP from XMP. The chain is GMP synthase [glutamine-hydrolyzing] from Pelodictyon phaeoclathratiforme (strain DSM 5477 / BU-1).